The chain runs to 149 residues: Transcription factor bHLH153 (149 aa).

The bHLH domain occupies 27–76 (RHKSDLSFSSKERKDKVGERISALQQIVSPYGKTDTASVLLDAMHYIEFL).

It belongs to the bHLH protein family.

The protein localises to the nucleus. This Arabidopsis thaliana (Mouse-ear cress) protein is Transcription factor bHLH153.